The following is a 118-amino-acid chain: Small ribosomal subunit protein uS13 (118 aa).

The segment at 94–118 is disordered; that stretch reads GLPVRGQRTRTNARTRKGPRKAIKK.

It belongs to the universal ribosomal protein uS13 family. In terms of assembly, part of the 30S ribosomal subunit. Forms a loose heterodimer with protein S19. Forms two bridges to the 50S subunit in the 70S ribosome.

In terms of biological role, located at the top of the head of the 30S subunit, it contacts several helices of the 16S rRNA. In the 70S ribosome it contacts the 23S rRNA (bridge B1a) and protein L5 of the 50S subunit (bridge B1b), connecting the 2 subunits; these bridges are implicated in subunit movement. Contacts the tRNAs in the A and P-sites. The sequence is that of Small ribosomal subunit protein uS13 from Thiobacillus denitrificans (strain ATCC 25259 / T1).